The following is a 494-amino-acid chain: DNA-directed DNA/RNA polymerase mu (494 aa).

Residues 1 to 24 (MLPKRRRARVGSPSGDAASSTPPS) are disordered. Serine 12 carries the phosphoserine modification. One can recognise a BRCT domain in the interval 22-122 (PPSTRFPGVA…QPVPVECRHR (101 aa)). Positions 323–332 (RGKLQGHDVD) are involved in ssDNA binding. Mg(2+) contacts are provided by aspartate 330, aspartate 332, and aspartate 418.

The protein belongs to the DNA polymerase type-X family. The cofactor is Mg(2+). In terms of tissue distribution, expressed in a number of tissues. Abundant in thymus.

It is found in the nucleus. The catalysed reaction is DNA(n) + a 2'-deoxyribonucleoside 5'-triphosphate = DNA(n+1) + diphosphate. Functionally, gap-filling polymerase involved in repair of DNA double-strand breaks by non-homologous end joining (NHEJ). Participates in immunoglobulin (Ig) light chain gene rearrangement in V(D)J recombination. In Homo sapiens (Human), this protein is DNA-directed DNA/RNA polymerase mu (POLM).